The chain runs to 239 residues: Methylthioribulose-1-phosphate dehydratase (239 aa).

Position 94 (Cys94) interacts with substrate. Positions 112 and 114 each coordinate Zn(2+). Glu136 functions as the Proton donor/acceptor in the catalytic mechanism. His192 is a binding site for Zn(2+).

Belongs to the aldolase class II family. MtnB subfamily. It depends on Zn(2+) as a cofactor.

The protein resides in the cytoplasm. It catalyses the reaction 5-(methylsulfanyl)-D-ribulose 1-phosphate = 5-methylsulfanyl-2,3-dioxopentyl phosphate + H2O. It functions in the pathway amino-acid biosynthesis; L-methionine biosynthesis via salvage pathway; L-methionine from S-methyl-5-thio-alpha-D-ribose 1-phosphate: step 2/6. In terms of biological role, catalyzes the dehydration of methylthioribulose-1-phosphate (MTRu-1-P) into 2,3-diketo-5-methylthiopentyl-1-phosphate (DK-MTP-1-P). Functions in the methionine salvage pathway. May play a role in apoptosis. This is Methylthioribulose-1-phosphate dehydratase from Xenopus tropicalis (Western clawed frog).